We begin with the raw amino-acid sequence, 133 residues long: Large ribosomal subunit protein uL16c (133 aa).

Belongs to the universal ribosomal protein uL16 family. In terms of assembly, part of the 50S ribosomal subunit.

The protein localises to the plastid. The sequence is that of Large ribosomal subunit protein uL16c from Euglena longa (Euglenophycean alga).